Consider the following 342-residue polypeptide: Heat-inducible transcription repressor HrcA (342 aa).

It belongs to the HrcA family.

In terms of biological role, negative regulator of class I heat shock genes (grpE-dnaK-dnaJ and groELS operons). Prevents heat-shock induction of these operons. The protein is Heat-inducible transcription repressor HrcA of Shouchella clausii (strain KSM-K16) (Alkalihalobacillus clausii).